Reading from the N-terminus, the 2144-residue chain is Insulin-like receptor (2144 aa).

The N-terminal stretch at 1-43 (MFNMPRGVTKSKSKRGKIKMENDMAAAATTTACTLGHICVLCR) is a signal peptide. Residue Asn-74 is glycosylated (N-linked (GlcNAc...) asparagine). The segment covering 174–199 (RRQHQQQHHHHYQHHHQQHHQQHHQR) has biased composition (basic residues). Positions 174-200 (RRQHQQQHHHHYQHHHQQHHQQHHQRQ) are disordered. A glycan (N-linked (GlcNAc...) asparagine) is linked at Asn-203. The tract at residues 229–256 (NYKQQQQLQHNQQLPRATPQQKQQEKDR) is disordered. The segment covering 232-242 (QQQQLQHNQQL) has biased composition (low complexity). Asn-265, Asn-356, Asn-376, Asn-406, Asn-468, and Asn-509 each carry an N-linked (GlcNAc...) asparagine glycan. Intrachain disulfides connect Cys-531/Cys-539, Cys-535/Cys-545, Cys-546/Cys-554, Cys-550/Cys-564, Cys-567/Cys-576, Cys-580/Cys-591, Cys-597/Cys-618, and Cys-635/Cys-638. The FU repeat unit spans residues 542 to 586 (EHTCCSQDCLGGCVIDKNGNESCISCRNVSFNNICMDSCPKGYYQ). Asn-561 and Asn-569 each carry an N-linked (GlcNAc...) asparagine glycan. 11 N-linked (GlcNAc...) asparagine glycosylation sites follow: Asn-751, Asn-810, Asn-824, Asn-839, Asn-864, Asn-898, Asn-946, Asn-1053, Asn-1147, Asn-1218, and Asn-1265. Fibronectin type-III domains follow at residues 825–927 (VTTK…TNPG) and 928–1026 (RPSK…EYDD). A disordered region spans residues 1053 to 1084 (NGSSDKSDGAEGAALDSNAIPNGGATNPSRRR). One can recognise a Fibronectin type-III 3 domain in the interval 1210–1305 (LKVDLEHANN…EVEHIKVEPP (96 aa)). The chain crosses the membrane as a helical span at residues 1311-1331 (VFFWLLGIGLAFLIVSLFGYV). Topologically, residues 1332–2144 (CYLHKRKVPS…PPNGFIGREA (813 aa)) are cytoplasmic. The interval 1351–1354 (NPFY) is chico-binding. Tyr-1354 is modified (phosphotyrosine; by autocatalysis). Residues 1371–1659 (IIQLAPLGQG…LEPQCPNSQF (289 aa)) enclose the Protein kinase domain. ATP-binding positions include 1377–1385 (LGQGSFGMV) and Lys-1405. The active-site Proton acceptor is the Asp-1519. Tyr-1545, Tyr-1549, and Tyr-1550 each carry phosphotyrosine; by autocatalysis. 4 disordered regions span residues 1690 to 1724 (VPLDQDLQDREQQEDATTPLRMGDYQQNSSLDQPP), 1788 to 1871 (RGYE…KKTV), 1886 to 1962 (LFNH…ISDN), and 2020 to 2144 (ISHN…GREA). Residue Ser-1816 is modified to Phosphoserine. Composition is skewed to low complexity over residues 1849 to 1860 (STASAGSSNASS) and 1894 to 1916 (SNASHKSNASNAPSTSSNTNLTS). The segment covering 2042-2062 (SDEDNEQEEDDEDEDDDVDDE) has biased composition (acidic residues). Residues 2063 to 2073 (HVEHIKMERMP) are compositionally biased toward basic and acidic residues. Residues 2084–2120 (SKTQPPRSRSVSQTRKSPTNPNSGIGATGAGNRSNLL) are compositionally biased toward polar residues.

The protein belongs to the protein kinase superfamily. Tyr protein kinase family. Insulin receptor subfamily. Tetramer of 2 alpha and 2 beta chains linked by disulfide bonds. The alpha chains contribute to the formation of the ligand-binding domain, while the beta chains carry the kinase domain. Interacts (via C-terminal cytoplasmic region) with dock/dreadlocks (via SH2 and SH3 domains); when autophosphorylated. May interact (via beta subunit) with chico/IRS-1; this interaction may lead to tyrosine phosphorylation of the insulin receptor substrate chico. Interacts with Elp6; the interaction may stabilize Elp6. Mn(2+) serves as cofactor. The 280 kDa proreceptor is proteolytically processed to form a 120 kDa alpha subunit and a 170 kDa beta subunit. The beta subunit undergoes cell-specific cleavage to generate a 90 kDa beta subunit and a free 60 kDa C-terminal subunit. Both the 90 kDa and the 170 kDa beta subunits can assemble with the alpha subunits to form mature receptors. Post-translationally, autophosphorylated on tyrosine residues, including Tyr-1549 and Tyr-1550, in response to exogenous insulin. Tyr-1549 and Tyr-1550 are dephosphorylated by Ptp61F recruited by the dock/dreadlocks adapter protein. In terms of processing, phosphorylation of Tyr-1354 is required for Chico-binding.

It localises to the membrane. Its subcellular location is the cell projection. It is found in the axon. The protein localises to the growth cone membrane. The catalysed reaction is L-tyrosyl-[protein] + ATP = O-phospho-L-tyrosyl-[protein] + ADP + H(+). With respect to regulation, activated in response to insulin. Autophosphorylation activates the kinase activity. In terms of biological role, has a ligand-stimulated tyrosine-protein kinase activity. Binds 3 insulin-like peptide ligands. Regulates cell number and cell size during development by regulating cell growth and survival, affecting body size and organ size, including ovaries and imaginal disks. Plays a role in life-span determination. May be involved in regulation of other neuroendocrine signaling pathways. Involved in the development of the embryonic nervous system. Functions upstream of dock/dreadlocks for photoreceptor (R cell) axon guidance and targeting in the visual system. Involved in the acs mediated recovery of gut enterocytes following the cytoplasmic purge response to intestinal bacterial infection. This is Insulin-like receptor from Drosophila melanogaster (Fruit fly).